Reading from the N-terminus, the 468-residue chain is ERO1-like protein alpha (468 aa).

The N-terminal stretch at 1–23 is a signal peptide; that stretch reads MGRGWGFLFGLLGAVWLLSSGHG. 8 cysteine pairs are disulfide-bonded: C35-C48, C37-C46, C85-C391, C94-C99, C94-C131, C99-C104, C208-C241, and C394-C397. A phosphoserine mark is found at S106 and S143. The residue at position 145 (S145) is a Phosphoserine; by FAM20C. 3 residues coordinate FAD: R187, T189, and W200. Residues S252 and H255 each coordinate FAD. N-linked (GlcNAc...) asparagine glycosylation is present at N280. FAD-binding residues include R287 and R300. N-linked (GlcNAc...) asparagine glycosylation is present at N384.

This sequence belongs to the EROs family. As to quaternary structure, predominantly monomer. May function both as a monomer and a homodimer. Interacts with PDILT. Interacts with ERP44; the interaction results in retention of ERO1A in the endoplasmic reticulum. FAD serves as cofactor. Post-translationally, N-glycosylated. The Cys-94/Cys-99 and Cys-394/Cys-397 disulfide bonds constitute the redox-active center. The Cys-94/Cys-99 disulfide bond may accept electron from P4HB and funnel them to the active site disulfide Cys-394/Cys-397. The regulatory Cys-99/Cys-104 disulfide bond stabilizes the other regulatory bond Cys-94/Cys-131. In terms of processing, phosphorylated on Ser-145 by FAM20C in the Golgi which increases its enzymatic activity. Phosphorylation is induced by lactation. It is also induced by hypoxia and reductive stress. Widely expressed at low level. Expressed at high level in upper digestive tract. Highly expressed in esophagus. Weakly expressed in stomach and duodenum.

It is found in the endoplasmic reticulum membrane. It localises to the golgi apparatus lumen. Its subcellular location is the secreted. The protein localises to the cell projection. The protein resides in the dendrite. Its activity is regulated as follows. Enzyme activity is tightly regulated to prevent the accumulation of reactive oxygen species in the endoplasmic reticulum. Reversibly down-regulated by the formation of disulfide bonds between the active site Cys-94 and Cys-131, and between Cys-99 and Cys-104. Glutathione may be required to regulate its activity in the endoplasmic reticulum. Oxidoreductase involved in disulfide bond formation in the endoplasmic reticulum. Efficiently reoxidizes P4HB/PDI, the enzyme catalyzing protein disulfide formation, in order to allow P4HB to sustain additional rounds of disulfide formation. Following P4HB reoxidation, passes its electrons to molecular oxygen via FAD, leading to the production of reactive oxygen species (ROS) in the cell. Required for the proper folding of immunoglobulins. Plays an important role in ER stress-induced, CHOP-dependent apoptosis by activating the inositol 1,4,5-trisphosphate receptor IP3R1. Involved in the release of the unfolded cholera toxin from reduced P4HB/PDI in case of infection by V.cholerae, thereby playing a role in retrotranslocation of the toxin. In Homo sapiens (Human), this protein is ERO1-like protein alpha.